The chain runs to 415 residues: Plasminogen activator inhibitor 2, macrophage (415 aa).

Asn23, Asn75, Asn261, and Asn339 each carry an N-linked (GlcNAc...) asparagine glycan.

The protein belongs to the serpin family. Ov-serpin subfamily. As to quaternary structure, interacts with PSMB1. The signal sequence is not cleaved.

The protein resides in the cytoplasm. It is found in the secreted. Its subcellular location is the extracellular space. Inhibits urokinase-type plasminogen activator. The monocyte derived PAI-2 is distinct from the endothelial cell-derived PAI-1. Not required for normal murine development or survival. In Mus musculus (Mouse), this protein is Plasminogen activator inhibitor 2, macrophage (Serpinb2).